Here is a 357-residue protein sequence, read N- to C-terminus: tRNA/tmRNA (uracil-C(5))-methyltransferase (357 aa).

Positions 185, 212, 217, 233, and 291 each coordinate S-adenosyl-L-methionine. Cys-316 functions as the Nucleophile in the catalytic mechanism. Glu-350 acts as the Proton acceptor in catalysis.

The protein belongs to the class I-like SAM-binding methyltransferase superfamily. RNA M5U methyltransferase family. TrmA subfamily.

It carries out the reaction uridine(54) in tRNA + S-adenosyl-L-methionine = 5-methyluridine(54) in tRNA + S-adenosyl-L-homocysteine + H(+). The catalysed reaction is uridine(341) in tmRNA + S-adenosyl-L-methionine = 5-methyluridine(341) in tmRNA + S-adenosyl-L-homocysteine + H(+). In terms of biological role, dual-specificity methyltransferase that catalyzes the formation of 5-methyluridine at position 54 (m5U54) in all tRNAs, and that of position 341 (m5U341) in tmRNA (transfer-mRNA). The protein is tRNA/tmRNA (uracil-C(5))-methyltransferase of Campylobacter hominis (strain ATCC BAA-381 / DSM 21671 / CCUG 45161 / LMG 19568 / NCTC 13146 / CH001A).